Consider the following 125-residue polypeptide: Alpha-endosulfine (125 aa).

Basic and acidic residues predominate over residues 1-37 (MSDKYIGDSHLEETGEEKQDSQEKEAVTPEKAEEQKL). Residues 1-52 (MSDKYIGDSHLEETGEEKQDSQEKEAVTPEKAEEQKLKAKYPNLGQKPGGSD) are disordered. Phosphothreonine; by CDK2 is present on threonine 28. Phosphoserine; by GWL is present on serine 67. The interval 86-107 (GPDKNLVTGDHIPTPQDLPQRK) is disordered. Residue threonine 99 is modified to Phosphothreonine; by CDK2. Serine 109 carries the phosphoserine; by PKA modification.

This sequence belongs to the endosulfine family. Interacts (when phosphorylated at Ser-67) with ppp2r2d. Post-translationally, phosphorylation at Ser-67 by gwl during mitosis is essential for interaction with PPP2R2D (PR55-delta) and subsequent inactivation of PP2A. Phosphorylated by PKA.

Its subcellular location is the cytoplasm. In terms of biological role, protein phosphatase inhibitor that specifically inhibits protein phosphatase 2A (PP2A) during mitosis. When phosphorylated at Ser-67 during mitosis, specifically interacts with ppp2r2d (PR55-delta) and inhibits its activity, leading to inactivation of PP2A, an essential condition to keep cyclin-B1-CDK1 activity high during M phase. The chain is Alpha-endosulfine (ensa) from Xenopus laevis (African clawed frog).